The sequence spans 224 residues: Ribonuclease 3 (224 aa).

In terms of domain architecture, RNase III spans 4-127 (IEKLERSLTY…IIGAIHLEAG (124 aa)). Position 40 (Glu40) interacts with Mg(2+). Asp44 is a catalytic residue. Residues Asp113 and Glu116 each coordinate Mg(2+). Glu116 is an active-site residue. Residues 154-223 (DYKTKLQEIT…AKIALEKLGA (70 aa)) form the DRBM domain.

Belongs to the ribonuclease III family. In terms of assembly, homodimer. Requires Mg(2+) as cofactor.

The protein localises to the cytoplasm. It catalyses the reaction Endonucleolytic cleavage to 5'-phosphomonoester.. Digests double-stranded RNA. Involved in the processing of primary rRNA transcript to yield the immediate precursors to the large and small rRNAs (23S and 16S). Processes some mRNAs, and tRNAs when they are encoded in the rRNA operon. Processes pre-crRNA and tracrRNA of type II CRISPR loci if present in the organism. The sequence is that of Ribonuclease 3 from Campylobacter jejuni (strain RM1221).